The chain runs to 122 residues: Large ribosomal subunit protein uL14 (122 aa).

The protein belongs to the universal ribosomal protein uL14 family. In terms of assembly, part of the 50S ribosomal subunit. Forms a cluster with proteins L3 and L19. In the 70S ribosome, L14 and L19 interact and together make contacts with the 16S rRNA in bridges B5 and B8.

Binds to 23S rRNA. Forms part of two intersubunit bridges in the 70S ribosome. The polypeptide is Large ribosomal subunit protein uL14 (Thermotoga petrophila (strain ATCC BAA-488 / DSM 13995 / JCM 10881 / RKU-1)).